The primary structure comprises 312 residues: MAKMFSFILVTTALVMGRGSSALENCLQEQARLRAQVYLLETRVKQQQVKISQLLHEKQVQLLDKGEENSVIDLGGKRQYADCSEIFNDGYKQSGFYKIKPLQSPAEFSVYCDMSDGGGWTVIQRRSDGSENFNRDWSDYENGFGNFVQKNGEYWLGNRNLHLLTTQGDYTLKIDLADFEKNSRYAQYKNFKVGDEKNSYDLHIGEYSGTAGDSLTGNFHPEVQWWASHQRMKFSTWDRDNDNYEGNCAKEDQSGWWFNRCHSANLNGFYHKGPYTAKTDNGIVWHTWHGWWYSLKSVVMKIRPNDFIPNIV.

The signal sequence occupies residues 1–22; the sequence is MAKMFSFILVTTALVMGRGSSA. The stretch at 39 to 60 forms a coiled coil; the sequence is LLETRVKQQQVKISQLLHEKQV. Residues 74 to 306 form the Fibrinogen C-terminal domain; that stretch reads LGGKRQYADC…SVVMKIRPND (233 aa). Disulfide bonds link Cys83–Cys112 and Cys248–Cys261.

As to quaternary structure, homodimer. Interacts (via the Fibrinogen C-terminal domain) with LAG3 (via Ig-like domains 1 and 2).

The protein resides in the secreted. In terms of biological role, immune suppressive molecule that inhibits antigen-specific T-cell activation by acting as a major ligand of LAG3. Responsible for LAG3 T-cell inhibitory function. Binds LAG3 independently from MHC class II (MHC-II). Secreted by, and promotes growth of, hepatocytes. The sequence is that of Fibrinogen-like protein 1 (FGL1) from Bos taurus (Bovine).